The chain runs to 288 residues: Diaminopimelate epimerase (288 aa).

Substrate-binding residues include asparagine 14 and asparagine 67. Cysteine 76 serves as the catalytic Proton donor. Substrate is bound by residues 77-78, asparagine 166, asparagine 199, and 217-218; these read GN and ER. The Proton acceptor role is filled by cysteine 226. 227 to 228 lines the substrate pocket; that stretch reads GT.

Belongs to the diaminopimelate epimerase family. As to quaternary structure, homodimer.

Its subcellular location is the cytoplasm. The catalysed reaction is (2S,6S)-2,6-diaminopimelate = meso-2,6-diaminopimelate. The protein operates within amino-acid biosynthesis; L-lysine biosynthesis via DAP pathway; DL-2,6-diaminopimelate from LL-2,6-diaminopimelate: step 1/1. Catalyzes the stereoinversion of LL-2,6-diaminopimelate (L,L-DAP) to meso-diaminopimelate (meso-DAP), a precursor of L-lysine and an essential component of the bacterial peptidoglycan. In Bacillus thuringiensis (strain Al Hakam), this protein is Diaminopimelate epimerase.